The primary structure comprises 147 residues: MVDHARAARLAKRIQTIVATAIEREVKDRRLEYVTVTDTRVTGDLHDATVYYTVRGRTIDDQPDLKAAAEALQRARGQLRKIVGDQLSVRFTPTLSFELDTVPETSAHMEDLLARARARDLELAELKKNAQPAGDAHPYKDDDAMND.

The disordered stretch occupies residues 126 to 147 (LKKNAQPAGDAHPYKDDDAMND). Residues 137-147 (HPYKDDDAMND) are compositionally biased toward basic and acidic residues.

This sequence belongs to the RbfA family. In terms of assembly, monomer. Binds 30S ribosomal subunits, but not 50S ribosomal subunits or 70S ribosomes.

The protein localises to the cytoplasm. Functionally, one of several proteins that assist in the late maturation steps of the functional core of the 30S ribosomal subunit. Associates with free 30S ribosomal subunits (but not with 30S subunits that are part of 70S ribosomes or polysomes). Required for efficient processing of 16S rRNA. May interact with the 5'-terminal helix region of 16S rRNA. This chain is Ribosome-binding factor A, found in Corynebacterium diphtheriae (strain ATCC 700971 / NCTC 13129 / Biotype gravis).